We begin with the raw amino-acid sequence, 464 residues long: Signal recognition particle 54 kDa protein (464 aa).

Residues 104–111 (GLQGSGKT), 184–188 (DTAGR), and 242–245 (TKLD) contribute to the GTP site.

It belongs to the GTP-binding SRP family. SRP54 subfamily. As to quaternary structure, part of the signal recognition particle protein translocation system, which is composed of SRP and FtsY. Archaeal SRP consists of a 7S RNA molecule of 300 nucleotides and two protein subunits: SRP54 and SRP19.

It is found in the cytoplasm. The enzyme catalyses GTP + H2O = GDP + phosphate + H(+). Involved in targeting and insertion of nascent membrane proteins into the cytoplasmic membrane. Binds to the hydrophobic signal sequence of the ribosome-nascent chain (RNC) as it emerges from the ribosomes. The SRP-RNC complex is then targeted to the cytoplasmic membrane where it interacts with the SRP receptor FtsY. The sequence is that of Signal recognition particle 54 kDa protein from Halorubrum lacusprofundi (strain ATCC 49239 / DSM 5036 / JCM 8891 / ACAM 34).